Here is a 145-residue protein sequence, read N- to C-terminus: Oleosin L (145 aa).

An N-acetylalanine modification is found at Ala-2. 2 helical membrane-spanning segments follow: residues 36 to 56 (GSLLVLSGLTLAGTVIALTIA) and 59 to 79 (LLVIFSPVLVPAVITIFLLGA). The Proline-knot motif lies at 58-69 (PLLVIFSPVLVP). A compositionally biased stretch (basic and acidic residues) spans 123-132 (KAREMKDRAE). Residues 123 to 145 (KAREMKDRAEQFSQQPVAGSQTS) are disordered. A compositionally biased stretch (polar residues) spans 133–145 (QFSQQPVAGSQTS).

Belongs to the oleosin family. As to expression, expressed in seeds (at protein level).

It is found in the lipid droplet. Its subcellular location is the membrane. May have a structural role to stabilize the lipid body during desiccation of the seed by preventing coalescence of the oil. Probably interacts with both lipid and phospholipid moieties of lipid bodies. May also provide recognition signals for specific lipase anchorage in lipolysis during seedling growth. This Sesamum indicum (Oriental sesame) protein is Oleosin L.